Here is a 244-residue protein sequence, read N- to C-terminus: 3-deoxy-manno-octulosonate cytidylyltransferase (244 aa).

This sequence belongs to the KdsB family.

It localises to the cytoplasm. It catalyses the reaction 3-deoxy-alpha-D-manno-oct-2-ulosonate + CTP = CMP-3-deoxy-beta-D-manno-octulosonate + diphosphate. The protein operates within nucleotide-sugar biosynthesis; CMP-3-deoxy-D-manno-octulosonate biosynthesis; CMP-3-deoxy-D-manno-octulosonate from 3-deoxy-D-manno-octulosonate and CTP: step 1/1. It participates in bacterial outer membrane biogenesis; lipopolysaccharide biosynthesis. Activates KDO (a required 8-carbon sugar) for incorporation into bacterial lipopolysaccharide in Gram-negative bacteria. The chain is 3-deoxy-manno-octulosonate cytidylyltransferase from Rickettsia bellii (strain OSU 85-389).